Here is a 329-residue protein sequence, read N- to C-terminus: Cathepsin K (329 aa).

Residues 1–15 (MWGLTVLLLPVVSFA) form the signal peptide. A propeptide spans 16 to 114 (LYPEEILDTQ…TLYIPDWEGR (99 aa)) (activation peptide). Asn-103 carries an N-linked (GlcNAc...) asparagine glycan. Disulfide bonds link Cys-136-Cys-177, Cys-170-Cys-210, and Cys-269-Cys-318. Cys-139 is a catalytic residue. Active-site residues include His-276 and Asn-296.

This sequence belongs to the peptidase C1 family.

It localises to the lysosome. It is found in the secreted. The protein localises to the apical cell membrane. It carries out the reaction Broad proteolytic activity. With small-molecule substrates and inhibitors, the major determinant of specificity is P2, which is preferably Leu, Met &gt; Phe, and not Arg.. Thiol protease involved in osteoclastic bone resorption and may participate partially in the disorder of bone remodeling. Displays potent endoprotease activity against fibrinogen at acid pH. May play an important role in extracellular matrix degradation. Involved in the release of thyroid hormone thyroxine (T4) by limited proteolysis of TG/thyroglobulin in the thyroid follicle lumen. The chain is Cathepsin K (CTSK) from Bos taurus (Bovine).